Consider the following 274-residue polypeptide: Ethanolamine ammonia-lyase small subunit (274 aa).

Residues Val-161, Glu-182, and Cys-211 each contribute to the adenosylcob(III)alamin site.

It belongs to the EutC family. In terms of assembly, the basic unit is a heterodimer which dimerizes to form tetramers. The heterotetramers trimerize; 6 large subunits form a core ring with 6 small subunits projecting outwards. Requires adenosylcob(III)alamin as cofactor.

It localises to the bacterial microcompartment. It catalyses the reaction ethanolamine = acetaldehyde + NH4(+). It participates in amine and polyamine degradation; ethanolamine degradation. Its function is as follows. Catalyzes the deamination of various vicinal amino-alcohols to oxo compounds. Allows this organism to utilize ethanolamine as the sole source of nitrogen and carbon in the presence of external vitamin B12. The chain is Ethanolamine ammonia-lyase small subunit from Pseudomonas fluorescens (strain Pf0-1).